A 203-amino-acid polypeptide reads, in one-letter code: Small ribosomal subunit protein uS4 (203 aa).

The S4 RNA-binding domain maps to Arg93–Asp154.

The protein belongs to the universal ribosomal protein uS4 family. In terms of assembly, part of the 30S ribosomal subunit. Contacts protein S5. The interaction surface between S4 and S5 is involved in control of translational fidelity.

One of the primary rRNA binding proteins, it binds directly to 16S rRNA where it nucleates assembly of the body of the 30S subunit. Its function is as follows. With S5 and S12 plays an important role in translational accuracy. This Chlorobaculum parvum (strain DSM 263 / NCIMB 8327) (Chlorobium vibrioforme subsp. thiosulfatophilum) protein is Small ribosomal subunit protein uS4.